The sequence spans 603 residues: Elongation factor 4 (603 aa).

Positions 2-184 constitute a tr-type G domain; that stretch reads NHIRNFSIIA…AVVALIPAPK (183 aa). GTP contacts are provided by residues 14-19 and 131-134; these read DHGKST and NKMD.

It belongs to the TRAFAC class translation factor GTPase superfamily. Classic translation factor GTPase family. LepA subfamily.

The protein resides in the cell inner membrane. It carries out the reaction GTP + H2O = GDP + phosphate + H(+). Functionally, required for accurate and efficient protein synthesis under certain stress conditions. May act as a fidelity factor of the translation reaction, by catalyzing a one-codon backward translocation of tRNAs on improperly translocated ribosomes. Back-translocation proceeds from a post-translocation (POST) complex to a pre-translocation (PRE) complex, thus giving elongation factor G a second chance to translocate the tRNAs correctly. Binds to ribosomes in a GTP-dependent manner. The sequence is that of Elongation factor 4 from Polaromonas naphthalenivorans (strain CJ2).